We begin with the raw amino-acid sequence, 94 residues long: Pyrimidine/purine nucleoside phosphorylase (94 aa).

This sequence belongs to the nucleoside phosphorylase PpnP family.

It catalyses the reaction a purine D-ribonucleoside + phosphate = a purine nucleobase + alpha-D-ribose 1-phosphate. The catalysed reaction is adenosine + phosphate = alpha-D-ribose 1-phosphate + adenine. The enzyme catalyses cytidine + phosphate = cytosine + alpha-D-ribose 1-phosphate. It carries out the reaction guanosine + phosphate = alpha-D-ribose 1-phosphate + guanine. It catalyses the reaction inosine + phosphate = alpha-D-ribose 1-phosphate + hypoxanthine. The catalysed reaction is thymidine + phosphate = 2-deoxy-alpha-D-ribose 1-phosphate + thymine. The enzyme catalyses uridine + phosphate = alpha-D-ribose 1-phosphate + uracil. It carries out the reaction xanthosine + phosphate = alpha-D-ribose 1-phosphate + xanthine. In terms of biological role, catalyzes the phosphorolysis of diverse nucleosides, yielding D-ribose 1-phosphate and the respective free bases. Can use uridine, adenosine, guanosine, cytidine, thymidine, inosine and xanthosine as substrates. Also catalyzes the reverse reactions. The polypeptide is Pyrimidine/purine nucleoside phosphorylase (Salmonella typhimurium (strain LT2 / SGSC1412 / ATCC 700720)).